A 322-amino-acid chain; its full sequence is MEKQYRVLLYYKYVKIDEPEEFTAQHLKFCKELGLLGRILISEEGINGTVSGTVEQTEQYMNALKADPRFADMPIKIDEADGHAFRKMFVRHKKELVTLRLEDDVDPNVTTGKHLKPKDFYEQMQDPDTIVIDARNDYEYDLGHFRGAVRPDIEAFRELPDWIEEHKDMLEGKKILTYCTGGVRCEKFSGWLLKKGFEDVSQLDGGIVTYGKDPEVKGQMWDGQCYVFDERISVPVNRVEHVIIGKDYFTGEPCERYVNCANPACNKKMICTPENEYKYMRSCSHECRTNERNMYVKEHDMTQEEINERLALIEKEDHAAID.

Positions 125 to 219 constitute a Rhodanese domain; the sequence is QDPDTIVIDA…YGKDPEVKGQ (95 aa). Residue cysteine 179 is the Cysteine persulfide intermediate of the active site.

It belongs to the TrhO family.

It carries out the reaction uridine(34) in tRNA + AH2 + O2 = 5-hydroxyuridine(34) in tRNA + A + H2O. Catalyzes oxygen-dependent 5-hydroxyuridine (ho5U) modification at position 34 in tRNAs. This chain is tRNA uridine(34) hydroxylase, found in Bacillus velezensis (strain DSM 23117 / BGSC 10A6 / LMG 26770 / FZB42) (Bacillus amyloliquefaciens subsp. plantarum).